Here is a 632-residue protein sequence, read N- to C-terminus: tRNA uridine 5-carboxymethylaminomethyl modification enzyme MnmG (632 aa).

Residues 13-18 (GGGHAG), Val-125, and Ser-180 each bind FAD. 273–287 (GPRYCPSIEDKINRF) provides a ligand contact to NAD(+). Gln-370 is an FAD binding site.

It belongs to the MnmG family. Homodimer. Heterotetramer of two MnmE and two MnmG subunits. It depends on FAD as a cofactor.

Its subcellular location is the cytoplasm. Functionally, NAD-binding protein involved in the addition of a carboxymethylaminomethyl (cmnm) group at the wobble position (U34) of certain tRNAs, forming tRNA-cmnm(5)s(2)U34. This chain is tRNA uridine 5-carboxymethylaminomethyl modification enzyme MnmG, found in Shewanella sediminis (strain HAW-EB3).